A 237-amino-acid chain; its full sequence is Ribonuclease PH (237 aa).

Phosphate contacts are provided by residues arginine 86 and 124 to 126; that span reads GTR.

This sequence belongs to the RNase PH family. Homohexameric ring arranged as a trimer of dimers.

It catalyses the reaction tRNA(n+1) + phosphate = tRNA(n) + a ribonucleoside 5'-diphosphate. Its function is as follows. Phosphorolytic 3'-5' exoribonuclease that plays an important role in tRNA 3'-end maturation. Removes nucleotide residues following the 3'-CCA terminus of tRNAs; can also add nucleotides to the ends of RNA molecules by using nucleoside diphosphates as substrates, but this may not be physiologically important. Probably plays a role in initiation of 16S rRNA degradation (leading to ribosome degradation) during starvation. The polypeptide is Ribonuclease PH (Alteromonas mediterranea (strain DSM 17117 / CIP 110805 / LMG 28347 / Deep ecotype)).